We begin with the raw amino-acid sequence, 478 residues long: Ribosomal RNA small subunit methyltransferase F (478 aa).

S-adenosyl-L-methionine contacts are provided by residues Ala-126–Lys-132, Glu-150, Asp-177, and Asp-195. The active-site Nucleophile is Cys-248.

Belongs to the class I-like SAM-binding methyltransferase superfamily. RsmB/NOP family.

The protein localises to the cytoplasm. The catalysed reaction is cytidine(1407) in 16S rRNA + S-adenosyl-L-methionine = 5-methylcytidine(1407) in 16S rRNA + S-adenosyl-L-homocysteine + H(+). Functionally, specifically methylates the cytosine at position 1407 (m5C1407) of 16S rRNA. The chain is Ribosomal RNA small subunit methyltransferase F from Erwinia tasmaniensis (strain DSM 17950 / CFBP 7177 / CIP 109463 / NCPPB 4357 / Et1/99).